We begin with the raw amino-acid sequence, 188 residues long: GMP synthase [glutamine-hydrolyzing] subunit A (188 aa).

Positions 2 to 188 (KVAVIYFGGQ…FKNFIKICRK (187 aa)) constitute a Glutamine amidotransferase type-1 domain. The Nucleophile role is filled by C79. Active-site residues include H166 and E168.

In terms of assembly, heterodimer composed of a glutamine amidotransferase subunit (A) and a GMP-binding subunit (B).

It catalyses the reaction XMP + L-glutamine + ATP + H2O = GMP + L-glutamate + AMP + diphosphate + 2 H(+). Its pathway is purine metabolism; GMP biosynthesis; GMP from XMP (L-Gln route): step 1/1. In terms of biological role, catalyzes the synthesis of GMP from XMP. This is GMP synthase [glutamine-hydrolyzing] subunit A from Sulfolobus acidocaldarius (strain ATCC 33909 / DSM 639 / JCM 8929 / NBRC 15157 / NCIMB 11770).